A 586-amino-acid chain; its full sequence is RNA-directed RNA polymerase subunit beta (586 aa).

Residues 259 to 391 (VRAYSGSCSN…TNEKKTFFDG (133 aa)) enclose the RdRp catalytic domain. Residues D274, D359, and D360 each coordinate Mg(2+).

In terms of assembly, homodimer; the replicase complex can dimerize. Part of the viral RNA-dependent RNA polymerase complex, the other subunits are the host ribosomal protein S1, EF-Tu and EF-Ts. S1 is needed for the initiation of genomic RNA (+)-strand replication. Requires Mg(2+) as cofactor.

It catalyses the reaction RNA(n) + a ribonucleoside 5'-triphosphate = RNA(n+1) + diphosphate. Functionally, this is the catalytic subunit of the viral RNA-dependent RNA polymerase complex. This complex is involved in viral RNA replication that produces (+)-stranded genomes via a complementary, (-)-stranded intermediate. Binds RNA cooperatively with the host ribosomal protein S1. The sequence is that of RNA-directed RNA polymerase subunit beta from Escherichia coli.